We begin with the raw amino-acid sequence, 245 residues long: Small ribosomal subunit protein uS3 (245 aa).

In terms of domain architecture, KH type-2 spans 39–108 (IRNYIKKNYY…SVFVNVQEVK (70 aa)).

The protein belongs to the universal ribosomal protein uS3 family. Part of the 30S ribosomal subunit. Forms a tight complex with proteins S10 and S14.

In terms of biological role, binds the lower part of the 30S subunit head. Binds mRNA in the 70S ribosome, positioning it for translation. In Dictyoglomus turgidum (strain DSM 6724 / Z-1310), this protein is Small ribosomal subunit protein uS3.